A 434-amino-acid chain; its full sequence is Gamma-enolase (434 aa).

S2 carries the N-acetylserine modification. K5 carries the N6-acetyllysine modification. At T26 the chain carries Phosphothreonine. A Mg(2+)-binding site is contributed by S40. At Y44 the chain carries Phosphotyrosine. Residue K60 is modified to N6-acetyllysine; alternate. At K60 the chain carries N6-succinyllysine; alternate. K64 carries the post-translational modification N6-acetyllysine. Position 89 is an N6-acetyllysine; alternate (K89). K89 carries the N6-succinyllysine; alternate modification. H158 and E167 together coordinate substrate. An N6-acetyllysine mark is found at K193, K197, and K199. N6-acetyllysine; alternate is present on K202. A Glycyl lysine isopeptide (Lys-Gly) (interchain with G-Cter in SUMO2); alternate cross-link involves residue K202. Catalysis depends on E210, which acts as the Proton donor. K228 and K233 each carry N6-acetyllysine; alternate. An N6-succinyllysine; alternate modification is found at K228. Position 233 is an N6-(2-hydroxyisobutyryl)lysine; alternate (K233). Residue D245 participates in Mg(2+) binding. K256 is modified (N6-acetyllysine). S263 bears the Phosphoserine mark. Y287 carries the post-translational modification Phosphotyrosine. The residue at position 291 (S291) is a Phosphoserine. Mg(2+)-binding residues include E293 and D318. E293 and D318 together coordinate substrate. N6-acetyllysine occurs at positions 335 and 343. K343 (proton acceptor) is an active-site residue. Residues 370–373 (SHRS) and K394 contribute to the substrate site. K406 bears the N6-acetyllysine mark.

Belongs to the enolase family. As to quaternary structure, mammalian enolase is composed of 3 isozyme subunits, alpha, beta and gamma, which can form homodimers or heterodimers which are cell-type and development-specific. Requires Mg(2+) as cofactor. As to expression, the alpha/alpha homodimer is expressed in embryo and in most adult tissues. The alpha/beta heterodimer and the beta/beta homodimer are found in striated muscle, and the alpha/gamma heterodimer and the gamma/gamma homodimer in neurons.

The protein localises to the cytoplasm. It localises to the cell membrane. It catalyses the reaction (2R)-2-phosphoglycerate = phosphoenolpyruvate + H2O. The protein operates within carbohydrate degradation; glycolysis; pyruvate from D-glyceraldehyde 3-phosphate: step 4/5. Its function is as follows. Has neurotrophic and neuroprotective properties on a broad spectrum of central nervous system (CNS) neurons. Binds, in a calcium-dependent manner, to cultured neocortical neurons and promotes cell survival. This chain is Gamma-enolase (ENO2), found in Homo sapiens (Human).